The chain runs to 473 residues: L-seryl-tRNA(Sec) selenium transferase (473 aa).

K302 is modified (N6-(pyridoxal phosphate)lysine).

It belongs to the SelA family. The cofactor is pyridoxal 5'-phosphate.

It localises to the cytoplasm. The catalysed reaction is L-seryl-tRNA(Sec) + selenophosphate + H(+) = L-selenocysteinyl-tRNA(Sec) + phosphate. It functions in the pathway aminoacyl-tRNA biosynthesis; selenocysteinyl-tRNA(Sec) biosynthesis; selenocysteinyl-tRNA(Sec) from L-seryl-tRNA(Sec) (bacterial route): step 1/1. Converts seryl-tRNA(Sec) to selenocysteinyl-tRNA(Sec) required for selenoprotein biosynthesis. This chain is L-seryl-tRNA(Sec) selenium transferase, found in Shewanella oneidensis (strain ATCC 700550 / JCM 31522 / CIP 106686 / LMG 19005 / NCIMB 14063 / MR-1).